We begin with the raw amino-acid sequence, 340 residues long: Holliday junction branch migration complex subunit RuvB (340 aa).

The interval 1–183 is large ATPase domain (RuvB-L); it reads MKRDDLVSPE…FGISFRLDYY (183 aa). Residues Leu22, Arg23, Gly64, Lys67, Thr68, Thr69, 130-132, Arg173, Tyr183, and Arg220 contribute to the ATP site; that span reads EDF. A Mg(2+)-binding site is contributed by Thr68. The segment at 184-254 is small ATPAse domain (RuvB-S); that stretch reads AVEELTKIIN…VAVHALEMLE (71 aa). Residues 257–340 form a head domain (RuvB-H) region; the sequence is DRGFDQMDRS…KFEVGQKELF (84 aa). Positions 312 and 317 each coordinate DNA.

It belongs to the RuvB family. Homohexamer. Forms an RuvA(8)-RuvB(12)-Holliday junction (HJ) complex. HJ DNA is sandwiched between 2 RuvA tetramers; dsDNA enters through RuvA and exits via RuvB. An RuvB hexamer assembles on each DNA strand where it exits the tetramer. Each RuvB hexamer is contacted by two RuvA subunits (via domain III) on 2 adjacent RuvB subunits; this complex drives branch migration. In the full resolvosome a probable DNA-RuvA(4)-RuvB(12)-RuvC(2) complex forms which resolves the HJ.

The protein localises to the cytoplasm. The enzyme catalyses ATP + H2O = ADP + phosphate + H(+). The RuvA-RuvB-RuvC complex processes Holliday junction (HJ) DNA during genetic recombination and DNA repair, while the RuvA-RuvB complex plays an important role in the rescue of blocked DNA replication forks via replication fork reversal (RFR). RuvA specifically binds to HJ cruciform DNA, conferring on it an open structure. The RuvB hexamer acts as an ATP-dependent pump, pulling dsDNA into and through the RuvAB complex. RuvB forms 2 homohexamers on either side of HJ DNA bound by 1 or 2 RuvA tetramers; 4 subunits per hexamer contact DNA at a time. Coordinated motions by a converter formed by DNA-disengaged RuvB subunits stimulates ATP hydrolysis and nucleotide exchange. Immobilization of the converter enables RuvB to convert the ATP-contained energy into a lever motion, pulling 2 nucleotides of DNA out of the RuvA tetramer per ATP hydrolyzed, thus driving DNA branch migration. The RuvB motors rotate together with the DNA substrate, which together with the progressing nucleotide cycle form the mechanistic basis for DNA recombination by continuous HJ branch migration. Branch migration allows RuvC to scan DNA until it finds its consensus sequence, where it cleaves and resolves cruciform DNA. The polypeptide is Holliday junction branch migration complex subunit RuvB (Syntrophus aciditrophicus (strain SB)).